Consider the following 218-residue polypeptide: Cell division protein SepF (218 aa).

Residues 25–115 (DVAASTDNVI…IANRREQYQQ (91 aa)) form a disordered region. Positions 29–43 (STDNVIPRSQQSVRA) are enriched in polar residues. Residues 47-63 (PKQEPRNNHVQQDHQAR) show a composition bias toward basic and acidic residues.

Belongs to the SepF family. As to quaternary structure, homodimer. Interacts with FtsZ.

It localises to the cytoplasm. Cell division protein that is part of the divisome complex and is recruited early to the Z-ring. Probably stimulates Z-ring formation, perhaps through the cross-linking of FtsZ protofilaments. Its function overlaps with FtsA. The protein is Cell division protein SepF of Streptococcus pyogenes serotype M12 (strain MGAS2096).